Reading from the N-terminus, the 341-residue chain is UDP-glucose 4-epimerase (341 aa).

Belongs to the polysaccharide synthase family.

The catalysed reaction is UDP-alpha-D-glucose = UDP-alpha-D-galactose. In terms of biological role, epimerizes UDP-galactose to UDP-glucose. May contribute to formation of LPS or the exopolysaccharide slime layer by providing UDP-galactose as a substrate for either molecule. The protein is UDP-glucose 4-epimerase (capD) of Rickettsia prowazekii (strain Madrid E).